A 318-amino-acid chain; its full sequence is MDTQDMTAFPHRHLLGIEGLTATDVELILDLADGYVEQNRSPGRKSAILSGLTVVNLFFENSTRTRTSFELAAKRLGGDCINMSSDGSSVKKGESLIDTAMTLNAMHLDVLVVRHQESGAPLLLSSKVNCAVINAGDGAHEHPTQALLDALTIRRHKGTLRGLTVAICGDILHSRVARSNIHLLNIMGARVRVVAPPTLLPGAVDRLGVEVHHSMATGLKDADIVMMLRLQLERMQGQYLPSQREYFRFYGLDYDKLAVARPDALIMHPGPMNRGVEIDSLVADDIHRSVILEQVELGVAVRMACLDLLTRGHRGTGA.

Residues Arg64 and Thr65 each contribute to the carbamoyl phosphate site. Lys92 contributes to the L-aspartate binding site. The carbamoyl phosphate site is built by Arg114, His142, and Gln145. Positions 175 and 229 each coordinate L-aspartate. 2 residues coordinate carbamoyl phosphate: Gly270 and Pro271.

The protein belongs to the aspartate/ornithine carbamoyltransferase superfamily. ATCase family. Heterododecamer (2C3:3R2) of six catalytic PyrB chains organized as two trimers (C3), and six regulatory PyrI chains organized as three dimers (R2).

It carries out the reaction carbamoyl phosphate + L-aspartate = N-carbamoyl-L-aspartate + phosphate + H(+). It participates in pyrimidine metabolism; UMP biosynthesis via de novo pathway; (S)-dihydroorotate from bicarbonate: step 2/3. Functionally, catalyzes the condensation of carbamoyl phosphate and aspartate to form carbamoyl aspartate and inorganic phosphate, the committed step in the de novo pyrimidine nucleotide biosynthesis pathway. This is Aspartate carbamoyltransferase catalytic subunit from Rhodospirillum centenum (strain ATCC 51521 / SW).